We begin with the raw amino-acid sequence, 335 residues long: Nucleoid-associated protein YejK (335 aa).

It belongs to the YejK family.

The protein resides in the cytoplasm. It localises to the nucleoid. This is Nucleoid-associated protein YejK from Shigella dysenteriae serotype 1 (strain Sd197).